The primary structure comprises 166 residues: Ribosome-binding factor A (166 aa).

The segment at 122-166 is disordered; sequence HVADETDVEDSTDHEDDVTNSEDETKHVDIDTDSEEGTNTDGKAQ. A compositionally biased stretch (acidic residues) spans 126–143; the sequence is ETDVEDSTDHEDDVTNSE.

It belongs to the RbfA family. Monomer. Binds 30S ribosomal subunits, but not 50S ribosomal subunits or 70S ribosomes.

The protein localises to the cytoplasm. One of several proteins that assist in the late maturation steps of the functional core of the 30S ribosomal subunit. Associates with free 30S ribosomal subunits (but not with 30S subunits that are part of 70S ribosomes or polysomes). Required for efficient processing of 16S rRNA. May interact with the 5'-terminal helix region of 16S rRNA. This is Ribosome-binding factor A from Pseudoalteromonas translucida (strain TAC 125).